The primary structure comprises 469 residues: ATP synthase subunit beta (469 aa).

An ATP-binding site is contributed by 156–163 (GGAGVGKT).

It belongs to the ATPase alpha/beta chains family. F-type ATPases have 2 components, CF(1) - the catalytic core - and CF(0) - the membrane proton channel. CF(1) has five subunits: alpha(3), beta(3), gamma(1), delta(1), epsilon(1). CF(0) has three main subunits: a(1), b(2) and c(9-12). The alpha and beta chains form an alternating ring which encloses part of the gamma chain. CF(1) is attached to CF(0) by a central stalk formed by the gamma and epsilon chains, while a peripheral stalk is formed by the delta and b chains.

The protein localises to the cell membrane. It carries out the reaction ATP + H2O + 4 H(+)(in) = ADP + phosphate + 5 H(+)(out). Its function is as follows. Produces ATP from ADP in the presence of a proton gradient across the membrane. The catalytic sites are hosted primarily by the beta subunits. In Bacillus mycoides (strain KBAB4) (Bacillus weihenstephanensis), this protein is ATP synthase subunit beta.